A 347-amino-acid chain; its full sequence is NADH-ubiquinone oxidoreductase chain 2 (347 aa).

10 helical membrane passes run 3–23 (PLTL…TVFS), 59–79 (YFLT…LNIL), 95–115 (PVLI…HFWV), 127–147 (GLIL…QISP), 149–169 (INPT…GWGG), 178–198 (ILAY…TFNP), 200–220 (TMVL…MMFM), 241–261 (VSTI…TGFI), 274–294 (GNII…YFYM), and 325–345 (LITP…ALSV).

It belongs to the complex I subunit 2 family. As to quaternary structure, core subunit of respiratory chain NADH dehydrogenase (Complex I) which is composed of 45 different subunits. Interacts with TMEM242.

The protein localises to the mitochondrion inner membrane. The enzyme catalyses a ubiquinone + NADH + 5 H(+)(in) = a ubiquinol + NAD(+) + 4 H(+)(out). Core subunit of the mitochondrial membrane respiratory chain NADH dehydrogenase (Complex I) which catalyzes electron transfer from NADH through the respiratory chain, using ubiquinone as an electron acceptor. Essential for the catalytic activity and assembly of complex I. This is NADH-ubiquinone oxidoreductase chain 2 from Oryctolagus cuniculus (Rabbit).